The sequence spans 640 residues: Threonine--tRNA ligase (640 aa).

Positions 1–61 constitute a TGS domain; the sequence is MPIITLPDGS…TNDAEIQIIT (61 aa). Residues 242–533 form a catalytic region; the sequence is DHRKLGKKLS…LIENYSGNLP (292 aa). Residues Cys-333, His-384, and His-510 each coordinate Zn(2+).

This sequence belongs to the class-II aminoacyl-tRNA synthetase family. In terms of assembly, homodimer. Zn(2+) serves as cofactor.

Its subcellular location is the cytoplasm. It carries out the reaction tRNA(Thr) + L-threonine + ATP = L-threonyl-tRNA(Thr) + AMP + diphosphate + H(+). Functionally, catalyzes the attachment of threonine to tRNA(Thr) in a two-step reaction: L-threonine is first activated by ATP to form Thr-AMP and then transferred to the acceptor end of tRNA(Thr). Also edits incorrectly charged L-seryl-tRNA(Thr). The protein is Threonine--tRNA ligase of Prochlorococcus marinus (strain NATL1A).